We begin with the raw amino-acid sequence, 173 residues long: Mesogenin-1 (173 aa).

Over residues 39–68 (ESYSLSQTPSPQSVSPAASYESTYSSSPHT) the composition is skewed to polar residues. Disordered regions lie at residues 39 to 69 (ESYS…PHTG) and 96 to 117 (TKKD…ASER). Residues 99–114 (DHGHKTSMTTHRRRKA) show a composition bias toward basic residues. The bHLH domain maps to 109–163 (HRRRKASEREKLRMRAIAEALHTLRNNLPPMYSQGRQPLTKIQTLKCTINYISEL).

It localises to the nucleus. In terms of biological role, involved in specifying the paraxial, but not dorsal, mesoderm. May regulate the expression of T-box transcription factors required for mesoderm formation and differentiation, such as brachyury T, wnt8, vegt and eomes. The sequence is that of Mesogenin-1 (msgn1) from Xenopus laevis (African clawed frog).